Consider the following 97-residue polypeptide: Protein S100-A10 (97 aa).

Residues lysine 23, lysine 28, lysine 54, and lysine 57 each carry the N6-acetyllysine modification. In terms of domain architecture, EF-hand spans 47 to 82; sequence KDPLAVDKIMKDLDQCRDGKVGFQSFLSLVAGLTIA. The segment at 60-71 is ancestral calcium site; the sequence is DQCRDGKVGFQS.

The protein belongs to the S-100 family. As to quaternary structure, heterotetramer containing 2 light chains of S100A10/p11 and 2 heavy chains of ANXA2/p36. Interacts with SCN10A. Interacts with TASOR.

Because S100A10 induces the dimerization of ANXA2/p36, it may function as a regulator of protein phosphorylation in that the ANXA2 monomer is the preferred target (in vitro) of tyrosine-specific kinase. The chain is Protein S100-A10 (S100a10) from Mus musculus (Mouse).